Here is a 170-residue protein sequence, read N- to C-terminus: MASEAERTFHRFAVFGESSSSSKEITNKNFSKLCKDCDIMDGKAVTSTDVDIVFSKVKAKNARTINFQQFQEAMKELGQKRFKGKNPDEALQGVFKLMEGKDPATTGVTKSTTVGGVDRLTDTSKYTGTHKERFDESGKGKGIEGREETTDNSGYVSGYKGAGTYDKKNQ.

Low complexity predominate over residues 105–117; sequence TTGVTKSTTVGGV. The tract at residues 105 to 170 is disordered; that stretch reads TTGVTKSTTV…GAGTYDKKNQ (66 aa). Over residues 129-149 the composition is skewed to basic and acidic residues; that stretch reads THKERFDESGKGKGIEGREET.

Belongs to the TPPP family. As to expression, only expressed in male reproductive organs, including testis. Expressed in elongating spermatids at stages IV-VIII of the seminiferous epithelial cycle in testis and in mature sperm in the epididymis.

Its subcellular location is the cytoplasm. It is found in the cytosol. It localises to the cell projection. The protein resides in the cilium. The protein localises to the flagellum. In terms of biological role, probable regulator of microtubule dynamics required for sperm motility. In contrast to other members of the family, has no microtubule bundling activity. The chain is Tubulin polymerization-promoting protein family member 2 from Mus musculus (Mouse).